The primary structure comprises 149 residues: Calmodulin-3 (149 aa).

Position 2 is an N-acetylalanine (alanine 2). EF-hand domains are found at residues 8-43 (DQIA…LGQN), 44-79 (PTEA…KMKD), 81-116 (DSEE…LGEK), and 117-149 (LTDE…MMAK). Ca(2+) contacts are provided by aspartate 21, aspartate 23, aspartate 25, cysteine 27, glutamate 32, aspartate 57, aspartate 59, asparagine 61, threonine 63, glutamate 68, aspartate 94, aspartate 96, asparagine 98, and glutamate 105. The residue at position 116 (lysine 116) is an N6,N6,N6-trimethyllysine. Ca(2+)-binding residues include aspartate 130, aspartate 132, aspartate 134, glutamine 136, and glutamate 141.

The protein belongs to the calmodulin family.

In terms of biological role, calmodulin mediates the control of a large number of enzymes, ion channels and other proteins by Ca(2+). Among the enzymes to be stimulated by the calmodulin-Ca(2+) complex are a number of protein kinases and phosphatases. The polypeptide is Calmodulin-3 (CAM3) (Oryza sativa subsp. indica (Rice)).